Consider the following 141-residue polypeptide: Small ribosomal subunit protein uS12 (141 aa).

A disordered region spans residues 118–141 (TGVDKRRQQRSAYGAKRPKADKKK).

It belongs to the universal ribosomal protein uS12 family. In terms of assembly, part of the 30S ribosomal subunit. Contacts proteins S8 and S17. May interact with IF1 in the 30S initiation complex.

Its function is as follows. With S4 and S5 plays an important role in translational accuracy. Interacts with and stabilizes bases of the 16S rRNA that are involved in tRNA selection in the A site and with the mRNA backbone. Located at the interface of the 30S and 50S subunits, it traverses the body of the 30S subunit contacting proteins on the other side and probably holding the rRNA structure together. The combined cluster of proteins S8, S12 and S17 appears to hold together the shoulder and platform of the 30S subunit. The chain is Small ribosomal subunit protein uS12 from Mycoplasmoides gallisepticum (strain R(low / passage 15 / clone 2)) (Mycoplasma gallisepticum).